The chain runs to 265 residues: NAD kinase 1 (265 aa).

The active-site Proton acceptor is D45. Residues 45-46 (DG), H50, 122-123 (NE), R148, D150, and A185 each bind NAD(+).

This sequence belongs to the NAD kinase family. The cofactor is a divalent metal cation.

It localises to the cytoplasm. The catalysed reaction is NAD(+) + ATP = ADP + NADP(+) + H(+). Functionally, involved in the regulation of the intracellular balance of NAD and NADP, and is a key enzyme in the biosynthesis of NADP. Catalyzes specifically the phosphorylation on 2'-hydroxyl of the adenosine moiety of NAD to yield NADP. This chain is NAD kinase 1, found in Halalkalibacterium halodurans (strain ATCC BAA-125 / DSM 18197 / FERM 7344 / JCM 9153 / C-125) (Bacillus halodurans).